Here is a 202-residue protein sequence, read N- to C-terminus: Large ribosomal subunit protein bL25 (202 aa).

This sequence belongs to the bacterial ribosomal protein bL25 family. CTC subfamily. As to quaternary structure, part of the 50S ribosomal subunit; part of the 5S rRNA/L5/L18/L25 subcomplex. Contacts the 5S rRNA. Binds to the 5S rRNA independently of L5 and L18.

Functionally, this is one of the proteins that binds to the 5S RNA in the ribosome where it forms part of the central protuberance. The sequence is that of Large ribosomal subunit protein bL25 from Clostridium perfringens (strain ATCC 13124 / DSM 756 / JCM 1290 / NCIMB 6125 / NCTC 8237 / Type A).